The primary structure comprises 401 residues: Tryptophan synthase beta chain (401 aa).

The residue at position 92 (lysine 92) is an N6-(pyridoxal phosphate)lysine.

The protein belongs to the TrpB family. In terms of assembly, tetramer of two alpha and two beta chains. Pyridoxal 5'-phosphate is required as a cofactor.

The enzyme catalyses (1S,2R)-1-C-(indol-3-yl)glycerol 3-phosphate + L-serine = D-glyceraldehyde 3-phosphate + L-tryptophan + H2O. Its pathway is amino-acid biosynthesis; L-tryptophan biosynthesis; L-tryptophan from chorismate: step 5/5. Functionally, the beta subunit is responsible for the synthesis of L-tryptophan from indole and L-serine. The protein is Tryptophan synthase beta chain of Ruthia magnifica subsp. Calyptogena magnifica.